A 767-amino-acid chain; its full sequence is MAKRHKHFEGRGRGGSRGRGRGRGGSRGRGRGGSRSRGAGRGGFGRSSNDDNWRNSSIPFGDGDLGNFNFADIDVPRGRRVYYSPDDIEDYYFGKSENMESMKMGGLRPGHKREDTPRSSSFRARPVQFIKAKDVYDPSHDLIIKLRSKNLEQESQDEELSQGDAESAREDFESGTEEEIEEEEEVLPEIEREEVEEEEVEPEEVEEEEVEPEEVDSEDAESEEVDDKDLFFIDEEGYNEDTLPTVPSVSISEDSTVKKPQKTNLEFNDILTVGKVEINLAHDASDDGVFVSNVKKNYHPFSGYISQVMKNIQVSDEDDDEDDYEDEEEDFQSDFSYKYEQQTTSKAISADIEKLSISSENLKNSSDISRDNSPDNNEEQESKDPEFGFLEEDFVINTSEVSVTNIRIGFSENSYFLKCYRLFGHYESKWIDQETFLDLILNDLGLPEHRLNAYLTFIRDSLIPKEEPPEPTYSDIHFSDTSEEESDNDSEIGDDMREGIEDLISYATKLEKDRNFEFETKSLQTVGKGKKKKLLVQEDMQLDGVIASELQDKFSTRLDNKAKKRRTKEDFIDQENEKSDDLFKKYPYGLHVLNIKEEFELFIRRSDKEALVFPPLDPHGNKTITKFAKFYFMKTNKRGRGNQTHIFVQKVKATRYNEPNYNIIDNLTRQRPIFMRHDVSKPRNEYQRTERVKLPKGKFHVKEGEVVGQDAPVIDRNNIGRILLERLGWSEGEGLGIQGNKGISEPVFAVVKKSKTGLRHERKKRIE.

The span at 1 to 34 (MAKRHKHFEGRGRGGSRGRGRGRGGSRGRGRGGS) shows a compositional bias: basic residues. Disordered regions lie at residues 1–71 (MAKR…FNFA), 101–127 (SMKMGGLRPGHKREDTPRSSSFRARPV), 147–258 (RSKN…STVK), 363–387 (KNSSDISRDNSPDNNEEQESKDPEF), and 466–494 (EEPPEPTYSDIHFSDTSEEESDNDSEIGD). Over residues 35 to 45 (RSRGAGRGGFG) the composition is skewed to gly residues. Over residues 173 to 239 (ESGTEEEIEE…LFFIDEEGYN (67 aa)) the composition is skewed to acidic residues. The span at 245–254 (TVPSVSISED) shows a compositional bias: polar residues. Positions 481-493 (TSEEESDNDSEIG) are enriched in acidic residues. One can recognise an R3H domain in the interval 589–652 (GLHVLNIKEE…QTHIFVQKVK (64 aa)). One can recognise a G-patch domain in the interval 716–763 (RNNIGRILLERLGWSEGEGLGIQGNKGISEPVFAVVKKSKTGLRHERK).

The protein belongs to the SQS1 family.

It localises to the cytoplasm. Its subcellular location is the nucleus. May be involved in splicing. In Vanderwaltozyma polyspora (strain ATCC 22028 / DSM 70294 / BCRC 21397 / CBS 2163 / NBRC 10782 / NRRL Y-8283 / UCD 57-17) (Kluyveromyces polysporus), this protein is Protein SQS1 (SQS1).